Reading from the N-terminus, the 173-residue chain is Large ribosomal subunit protein uL16 (173 aa).

Belongs to the universal ribosomal protein uL16 family.

This Methanococcus maripaludis (strain C6 / ATCC BAA-1332) protein is Large ribosomal subunit protein uL16.